The chain runs to 125 residues: Small ribosomal subunit protein uS13 (125 aa).

The disordered stretch occupies residues 93–125 (RKGLPVRGQRTKTNARTRKGPKRTVAGKKKAGR).

This sequence belongs to the universal ribosomal protein uS13 family. Part of the 30S ribosomal subunit. Forms a loose heterodimer with protein S19. Forms two bridges to the 50S subunit in the 70S ribosome.

Functionally, located at the top of the head of the 30S subunit, it contacts several helices of the 16S rRNA. In the 70S ribosome it contacts the 23S rRNA (bridge B1a) and protein L5 of the 50S subunit (bridge B1b), connecting the 2 subunits; these bridges are implicated in subunit movement. Contacts the tRNAs in the A and P-sites. The protein is Small ribosomal subunit protein uS13 of Arthrobacter sp. (strain FB24).